The chain runs to 228 residues: Octanoyltransferase (228 aa).

The BPL/LPL catalytic domain occupies 30 to 214 (KKIGDTLLLL…YFGKVFGKSL (185 aa)). Substrate is bound by residues 75–82 (RGGDVTYH), 144–146 (AIG), and 157–159 (GFA). Catalysis depends on Cys175, which acts as the Acyl-thioester intermediate.

This sequence belongs to the LipB family.

It is found in the cytoplasm. The enzyme catalyses octanoyl-[ACP] + L-lysyl-[protein] = N(6)-octanoyl-L-lysyl-[protein] + holo-[ACP] + H(+). The protein operates within protein modification; protein lipoylation via endogenous pathway; protein N(6)-(lipoyl)lysine from octanoyl-[acyl-carrier-protein]: step 1/2. In terms of biological role, catalyzes the transfer of endogenously produced octanoic acid from octanoyl-acyl-carrier-protein onto the lipoyl domains of lipoate-dependent enzymes. Lipoyl-ACP can also act as a substrate although octanoyl-ACP is likely to be the physiological substrate. The protein is Octanoyltransferase of Caldicellulosiruptor bescii (strain ATCC BAA-1888 / DSM 6725 / KCTC 15123 / Z-1320) (Anaerocellum thermophilum).